Here is a 1096-residue protein sequence, read N- to C-terminus: Mediator of replication checkpoint protein 1 (1096 aa).

Positions Glu68–Glu85 are enriched in basic and acidic residues. The interval Glu68–Thr90 is disordered. The residue at position 144 (Ser144) is a Phosphoserine. Disordered regions lie at residues Ala166–Gln200, Ile294–Pro316, and Asp336–Asn365. A compositionally biased stretch (polar residues) spans Arg181–Gln200. Residues Ile294–Lys315 are compositionally biased toward basic and acidic residues. A compositionally biased stretch (acidic residues) spans Asp336–Ile346. Ser409, Ser411, and Ser434 each carry phosphoserine. The stretch at Gln488 to Ala542 forms a coiled coil. Residues Glu527–Asp620 are disordered. The segment covering Ser547–Gly560 has biased composition (low complexity). Over residues Lys591–His600 the composition is skewed to basic residues. Residues Ser605 and Ser607 each carry the phosphoserine modification. The residue at position 609 (Thr609) is a Phosphothreonine. Over residues Val611–Asp620 the composition is skewed to basic and acidic residues. Positions Asp652–Thr716 form a coiled coil. Positions Glu724–Asp743 are disordered. Ser801 and Ser807 each carry phosphoserine. Residues Asp881–Gln898 show a composition bias toward polar residues. The segment at Asp881–Gln903 is disordered. Position 911 is a phosphoserine (Ser911). The segment at Arg1058–Asn1096 is disordered. Residues Arg1065 to Ser1083 show a composition bias toward basic residues.

In terms of assembly, interacts with CDC45 in S phase. Phosphorylated by MEC1 and RAD53.

It is found in the nucleus. In terms of biological role, required for normal DNA replication. Phosphorylated in response to DNA replication stress. Phosphorylation allows it to mediate the activation of RAD53. This Saccharomyces cerevisiae (strain ATCC 204508 / S288c) (Baker's yeast) protein is Mediator of replication checkpoint protein 1 (MRC1).